Consider the following 212-residue polypeptide: Ras-related protein Rab-2A (212 aa).

N-acetylalanine is present on Ala-2. A required for interaction with PRKCI region spans residues 2 to 19 (AYAYLFKYIIIGDTGVGK). Residues Gly-16, Val-17, Gly-18, Lys-19, Ser-20, Cys-21, and Thr-38 each contribute to the GTP site. Ser-20 lines the Mg(2+) pocket. Positions 37–42 (LTMGVE) match the Switch 1 motif. Thr-38 and Asp-61 together coordinate Mg(2+). The Switch 2 motif lies at 63–72 (AGQESFRSIT). Residues Gly-64, Asn-119, Lys-120, Asp-122, Ala-150, and Lys-151 each coordinate GTP. Residues 190-212 (QHAATNASHGGNQGGQQAGGGCC) are disordered. Gly residues predominate over residues 200-212 (GNQGGQQAGGGCC). 2 S-geranylgeranyl cysteine lipidation sites follow: Cys-211 and Cys-212.

The protein belongs to the small GTPase superfamily. Rab family. Interacts with PRKCI. Interacts with TRIP11. Interacts (in GTP-bound form) with GARIN1B. Interacts (GTP-bound) with HOPS complex component VPS39; interaction contributes to obtaining a functional HOPS complex that promotes autophagosome-lysosome membrane fusion driven by STX17-SNAP29-VAMP8. May interact with VPS41. Requires Mg(2+) as cofactor. Prenylated. Prenylation is required for association with cellular membranes.

It localises to the endoplasmic reticulum-Golgi intermediate compartment membrane. It is found in the melanosome. Its subcellular location is the endoplasmic reticulum membrane. The protein resides in the golgi apparatus membrane. The protein localises to the cytoplasmic vesicle. It localises to the secretory vesicle. It is found in the acrosome. Its subcellular location is the autophagosome membrane. The catalysed reaction is GTP + H2O = GDP + phosphate + H(+). Regulated by guanine nucleotide exchange factors (GEFs) which promote the exchange of bound GDP for free GTP, GTPase activating proteins (GAPs) which increase the GTP hydrolysis activity, and GDP dissociation inhibitors (GDIs) which inhibit the dissociation of the nucleotide from the GTPase. In terms of biological role, the small GTPases Rab are key regulators of intracellular membrane trafficking, from the formation of transport vesicles to their fusion with membranes. Rabs cycle between active GTP-bound and inactive GDP-bound states. In their active state, drive transport of vesicular carriers from donor organelles to acceptor organelles to regulate the membrane traffic that maintains organelle identity and morphology. RAB2A regulates autophagy by promoting autophagosome-lysosome fusion via recruitment of the HOPS endosomal tethering complex; this process involves autophagosomal RAB2A and lysosomal RAB39A recruitment of HOPS subcomplexes VPS39-VPS11 and VPS41-VPS16-VPS18-VPS33A, respectively, which assemble into a functional complex to mediate membrane tethering and SNAREs-driven membrane fusion. Required for protein transport from the endoplasmic reticulum to the Golgi complex. Regulates the compacted morphology of the Golgi. Together with RAB2B, redundantly required for efficient autophagic flux. In Rattus norvegicus (Rat), this protein is Ras-related protein Rab-2A (Rab2a).